The following is a 302-amino-acid chain: MVTEQEVDAIGQTLVDPKQPLQARFRALFTLRGLGGPGAIAWISQAFDDDSALLKHELAYCLGQMQDARAIPMLVDVLQDTRQEPMVRHEAGEALGAIGDPEVLEILKQYSSDPVIEVAETCQLAVRRLEWLQQHGGEPAAGPYLSVDPAPPAEERDVGRLREALLDESRPLFERYRAMFALRNAGGEEAALALAEGLHCGSALFRHEVGYVLGQLQHEAAVPQLAAALARCTENPMVRHECAEALGAIARPACLAALQAHADDPERVVRESCEVALDMYEHETGRAFQYADGLEQLRGAPS.

M1 bears the N-acetylmethionine mark. 5 HEAT-like PBS-type repeats span residues 54 to 80 (LKHE…VLQD), 87 to 113 (VRHE…YSSD), 174 to 200 (ERYR…GLHC), 205 to 231 (FRHE…ALAR), and 238 to 264 (VRHE…HADD). Residues H56, H89, and E90 each contribute to the Fe cation site. Fe cation is bound by residues H207, H240, and E241.

This sequence belongs to the deoxyhypusine hydroxylase family. The cofactor is Fe(2+).

The enzyme catalyses [eIF5A protein]-deoxyhypusine + AH2 + O2 = [eIF5A protein]-hypusine + A + H2O. It functions in the pathway protein modification; eIF5A hypusination. In terms of biological role, catalyzes the hydroxylation of the N(6)-(4-aminobutyl)-L-lysine intermediate produced by deoxyhypusine synthase/DHPS on a critical lysine of the eukaryotic translation initiation factor 5A/eIF-5A. This is the second step of the post-translational modification of that lysine into an unusual amino acid residue named hypusine. Hypusination is unique to mature eIF-5A factor and is essential for its function. This Homo sapiens (Human) protein is Deoxyhypusine hydroxylase.